Here is a 420-residue protein sequence, read N- to C-terminus: Serine--tRNA ligase (420 aa).

L-serine is bound at residue 227 to 229 (TSE). ATP-binding positions include 258-260 (RRE) and V274. An L-serine-binding site is contributed by E281. 345–348 (EVTS) lines the ATP pocket. T379 is an L-serine binding site.

Belongs to the class-II aminoacyl-tRNA synthetase family. Type-1 seryl-tRNA synthetase subfamily. As to quaternary structure, homodimer. The tRNA molecule binds across the dimer.

The protein resides in the cytoplasm. The catalysed reaction is tRNA(Ser) + L-serine + ATP = L-seryl-tRNA(Ser) + AMP + diphosphate + H(+). It carries out the reaction tRNA(Sec) + L-serine + ATP = L-seryl-tRNA(Sec) + AMP + diphosphate + H(+). Its pathway is aminoacyl-tRNA biosynthesis; selenocysteinyl-tRNA(Sec) biosynthesis; L-seryl-tRNA(Sec) from L-serine and tRNA(Sec): step 1/1. Catalyzes the attachment of serine to tRNA(Ser). Is also able to aminoacylate tRNA(Sec) with serine, to form the misacylated tRNA L-seryl-tRNA(Sec), which will be further converted into selenocysteinyl-tRNA(Sec). The chain is Serine--tRNA ligase from Acidothermus cellulolyticus (strain ATCC 43068 / DSM 8971 / 11B).